Here is a 120-residue protein sequence, read N- to C-terminus: NAD(P)H-quinone oxidoreductase subunit 3, chloroplastic (120 aa).

3 consecutive transmembrane segments (helical) span residues 9–29 (IFWAFLIISSLIPILAFFISG), 64–84 (MFALVFVVFDVETVFLYPWAM), and 88–108 (VLGLSVFLEAFVFVLILIVGL).

The protein belongs to the complex I subunit 3 family. In terms of assembly, NDH is composed of at least 16 different subunits, 5 of which are encoded in the nucleus.

The protein localises to the plastid. The protein resides in the chloroplast thylakoid membrane. It carries out the reaction a plastoquinone + NADH + (n+1) H(+)(in) = a plastoquinol + NAD(+) + n H(+)(out). The catalysed reaction is a plastoquinone + NADPH + (n+1) H(+)(in) = a plastoquinol + NADP(+) + n H(+)(out). NDH shuttles electrons from NAD(P)H:plastoquinone, via FMN and iron-sulfur (Fe-S) centers, to quinones in the photosynthetic chain and possibly in a chloroplast respiratory chain. The immediate electron acceptor for the enzyme in this species is believed to be plastoquinone. Couples the redox reaction to proton translocation, and thus conserves the redox energy in a proton gradient. This is NAD(P)H-quinone oxidoreductase subunit 3, chloroplastic from Jasminum nudiflorum (Winter jasmine).